A 278-amino-acid polypeptide reads, in one-letter code: 3-methyl-2-oxobutanoate hydroxymethyltransferase (278 aa).

Mg(2+)-binding residues include Asp43 and Asp82. 3-methyl-2-oxobutanoate-binding positions include 43 to 44, Asp82, and Lys112; that span reads DS. Glu114 contacts Mg(2+). Glu181 functions as the Proton acceptor in the catalytic mechanism.

It belongs to the PanB family. In terms of assembly, homodecamer; pentamer of dimers. Requires Mg(2+) as cofactor.

The protein localises to the cytoplasm. It carries out the reaction 3-methyl-2-oxobutanoate + (6R)-5,10-methylene-5,6,7,8-tetrahydrofolate + H2O = 2-dehydropantoate + (6S)-5,6,7,8-tetrahydrofolate. Its pathway is cofactor biosynthesis; (R)-pantothenate biosynthesis; (R)-pantoate from 3-methyl-2-oxobutanoate: step 1/2. In terms of biological role, catalyzes the reversible reaction in which hydroxymethyl group from 5,10-methylenetetrahydrofolate is transferred onto alpha-ketoisovalerate to form ketopantoate. This is 3-methyl-2-oxobutanoate hydroxymethyltransferase from Bacillus cereus (strain G9842).